Reading from the N-terminus, the 498-residue chain is Pentatricopeptide repeat-containing protein At3g61360 (498 aa).

PPR repeat units lie at residues 102-132 (TSDSFEKTLHILARMRYFDQAWALMAEVRKD), 138-172 (SFKSMSILLCKIAKFGSYEETLEAFVKMEKEIFRK), 175-205 (GVDEFNILLRAFCTEREMKEARSIFEKLHSR), 209-243 (DVKTMNILLLGFKEAGDVTATELFYHEMVKRGFKP), 244-278 (NSVTYGIRIDGFCKKRNFGEALRLFEDMDRLDFDI), 279-313 (TVQILTTLIHGSGVARNKIKARQLFDEISKRGLTP), 314-348 (DCGAYNALMSSLMKCGDVSGAIKVMKEMEEKGIEP), 349-385 (DSVTFHSMFIGMMKSKEFGFNGVCEYYQKMKERSLVP), and 386-420 (KTPTIVMLMKLFCHNGEVNLGLDLWKYMLEKGYCP).

It belongs to the PPR family. P subfamily.

This is Pentatricopeptide repeat-containing protein At3g61360 from Arabidopsis thaliana (Mouse-ear cress).